We begin with the raw amino-acid sequence, 949 residues long: Probable transcriptional regulatory protein STB4 (949 aa).

The segment at residues 87 to 113 (CELCKKRKVKCDGNNPCLNCSKHQKEC) is a DNA-binding region (zn(2)-C6 fungal-type). 2 stretches are compositionally biased toward low complexity: residues 164–178 (DGVS…NPNS) and 200–212 (SGSN…NNNS). Disordered stretches follow at residues 164–214 (DGVS…NSFP) and 862–888 (GERE…ATRS). The span at 862–874 (GEREENADERQEN) shows a compositional bias: basic and acidic residues.

Its subcellular location is the nucleus. Its function is as follows. Binds to SIN3. The sequence is that of Probable transcriptional regulatory protein STB4 (STB4) from Saccharomyces cerevisiae (strain ATCC 204508 / S288c) (Baker's yeast).